A 688-amino-acid chain; its full sequence is SRSF protein kinase 2 (688 aa).

A disordered region spans residues 1 to 65 (MSVNSEKSSS…EQEDPADYCK (65 aa)). The span at 22–43 (LVPPPPPPPPPPPPPLPDPTPP) shows a compositional bias: pro residues. Positions 44–61 (EPEEEILGSDDEEQEDPA) are enriched in acidic residues. Residue serine 52 is modified to Phosphoserine. The Protein kinase domain maps to 81–684 (YHVIRKLGWG…ASAGECLRHP (604 aa)). ATP contacts are provided by residues 87–95 (LGWGHFSTV) and lysine 110. Aspartate 214 serves as the catalytic Proton acceptor. Disordered regions lie at residues 239–277 (WQKAGAPPPSGSAVSTAPQQKPIGKISKNKKKKLKKKQK), 329–444 (GLEE…GRHK), and 469–501 (SVLSEGSPLTEQEESSPSHDRSRTVSASSTGDL). The segment covering 265–277 (SKNKKKKLKKKQK) has biased composition (basic residues). Position 380 is a phosphoserine (serine 380). Over residues 397 to 421 (QLDDEDDDEEDCPNPEEYNLDEPNA) the composition is skewed to acidic residues. The span at 423 to 433 (SDYTYSSSYEQ) shows a compositional bias: polar residues. A Phosphoserine modification is found at serine 475. Phosphothreonine is present on threonine 478. Residues serine 484, serine 486, and serine 490 each carry the phosphoserine modification. Threonine 492 carries the phosphothreonine; by PKB/AKT1 modification. A phosphoserine mark is found at serine 494 and serine 497. Serine 588 bears the Phosphoserine; by CK2 mark.

The protein belongs to the protein kinase superfamily. CMGC Ser/Thr protein kinase family. Associates with U4/U6-U5 tri-small nuclear ribonucleoproteins (U4/U6-U5 tri-snRNPs). Interacts with PKB/AKT1 in a phosphorylation-dependent manner. The phosphorylated form (by PKB/AKT1) interacts with YWHAB and YWHAE. Interaction with YWHAB suppresses its cleavage by caspases and inhibits the release of its N-terminal pro-apoptotic fragment. Interacts with SFN. Interacts with ACIN1. Interacts with POLR2A/RNA polymerase II; the interaction occurs during the co-transcriptional formation of inappropriate R-loops. It depends on Mg(2+) as a cofactor. Phosphorylation at Thr-492 by PKB/AKT1 enhances its stimulatory activity in triggering cyclin-D1 (CCND1) expression and promoting apoptosis in neurons, which can be blocked by YWHAB. It also enhances its protein kinase activity toward ACIN1 and SRSF2, promotes its nuclear translocation and prevents its proteolytic cleavage. Post-translationally, proteolytically cleaved at Asp-139 and Asp-403 by caspase-3 during apoptotic cell death. Cleavage at Asp-139 which is the major site of cleavage, produces a small N-terminal fragment that translocates into nucleus and promotes VP16-induced apoptosis. In terms of tissue distribution, highly expressed in brain, moderately expressed in heart and skeletal muscle and at low levels in lung, liver, and kidney.

Its subcellular location is the cytoplasm. It localises to the nucleus. The protein localises to the nucleoplasm. It is found in the nucleus speckle. The protein resides in the chromosome. The catalysed reaction is L-seryl-[protein] + ATP = O-phospho-L-seryl-[protein] + ADP + H(+). It carries out the reaction L-threonyl-[protein] + ATP = O-phospho-L-threonyl-[protein] + ADP + H(+). With respect to regulation, activated by phosphorylation on Ser-52 and Ser-588. Functionally, serine/arginine-rich protein-specific kinase which specifically phosphorylates its substrates at serine residues located in regions rich in arginine/serine dipeptides, known as RS domains and is involved in the phosphorylation of SR splicing factors and the regulation of splicing. Promotes neuronal apoptosis by up-regulating cyclin-D1 (CCND1) expression. This is done by the phosphorylation of SRSF2, leading to the suppression of p53/TP53 phosphorylation thereby relieving the repressive effect of p53/TP53 on cyclin-D1 (CCND1) expression. Phosphorylates ACIN1, and redistributes it from the nuclear speckles to the nucleoplasm, resulting in cyclin A1 but not cyclin A2 up-regulation. Plays an essential role in spliceosomal B complex formation via the phosphorylation of DDX23/PRP28. Probably by phosphorylating DDX23, leads to the suppression of incorrect R-loops formed during transcription; R-loops are composed of a DNA:RNA hybrid and the associated non-template single-stranded DNA. Can mediate hepatitis B virus (HBV) core protein phosphorylation. Plays a negative role in the regulation of HBV replication through a mechanism not involving the phosphorylation of the core protein but by reducing the packaging efficiency of the pregenomic RNA (pgRNA) without affecting the formation of the viral core particles. The polypeptide is SRSF protein kinase 2 (Homo sapiens (Human)).